The primary structure comprises 719 residues: Acyl-coenzyme A oxidase (719 aa).

The Microbody targeting signal motif lies at 716 to 719; it reads APKI.

This sequence belongs to the acyl-CoA oxidase family. The cofactor is FAD.

It is found in the peroxisome. The enzyme catalyses a 2,3-saturated acyl-CoA + O2 = a (2E)-enoyl-CoA + H2O2. Its pathway is lipid metabolism; peroxisomal fatty acid beta-oxidation. The polypeptide is Acyl-coenzyme A oxidase (POX1) (Komagataella pastoris (Yeast)).